The primary structure comprises 279 residues: Thermitase (279 aa).

Residue aspartate 5 participates in Ca(2+) binding. Residues 12 to 277 (QYGPQKIQAP…KGRVNAYKAV (266 aa)) form the Peptidase S8 domain. Aspartate 38 (charge relay system) is an active-site residue. Ca(2+) is bound by residues aspartate 47, aspartate 57, aspartate 60, aspartate 62, threonine 64, and glutamine 66. Histidine 71 functions as the Charge relay system in the catalytic mechanism. Ca(2+)-binding residues include valine 82, asparagine 85, threonine 87, and isoleucine 89. Residues alanine 173, tyrosine 175, and alanine 178 each coordinate Na(+). 2 residues coordinate Ca(2+): valine 199 and aspartate 201. Aspartate 201 is a binding site for Na(+). Serine 225 acts as the Charge relay system in catalysis.

It belongs to the peptidase S8 family. It depends on Ca(2+) as a cofactor. Requires Na(+) as cofactor.

It localises to the secreted. The enzyme catalyses Hydrolysis of proteins, including collagen.. The protein is Thermitase of Thermoactinomyces vulgaris.